The chain runs to 340 residues: Phosphate acyltransferase (340 aa).

Belongs to the PlsX family. Homodimer. Probably interacts with PlsY.

It localises to the cytoplasm. The enzyme catalyses a fatty acyl-[ACP] + phosphate = an acyl phosphate + holo-[ACP]. It participates in lipid metabolism; phospholipid metabolism. Catalyzes the reversible formation of acyl-phosphate (acyl-PO(4)) from acyl-[acyl-carrier-protein] (acyl-ACP). This enzyme utilizes acyl-ACP as fatty acyl donor, but not acyl-CoA. In Marinobacter nauticus (strain ATCC 700491 / DSM 11845 / VT8) (Marinobacter aquaeolei), this protein is Phosphate acyltransferase.